Reading from the N-terminus, the 189-residue chain is ATP-dependent protease subunit HslV (189 aa).

Thr-12 is an active-site residue. Na(+) is bound by residues Ala-172, Cys-175, and Thr-178.

The protein belongs to the peptidase T1B family. HslV subfamily. A double ring-shaped homohexamer of HslV is capped on each side by a ring-shaped HslU homohexamer. The assembly of the HslU/HslV complex is dependent on binding of ATP.

The protein localises to the cytoplasm. The catalysed reaction is ATP-dependent cleavage of peptide bonds with broad specificity.. Allosterically activated by HslU binding. Functionally, protease subunit of a proteasome-like degradation complex believed to be a general protein degrading machinery. This is ATP-dependent protease subunit HslV from Anaplasma phagocytophilum (strain HZ).